A 208-amino-acid polypeptide reads, in one-letter code: MTFNKISSEKGFTQVPLCLRKSKLSNLREYQNRIADIAKRSKAVLGWASTAQFGTDNQFIKDDAARAASILEAARKDPVFAGISDNATAQIATAWASALADYAAAHKSMPRPEILASCHQTLENCLIESTRNSMDATNKAMLESVAAEMMSVSDGVMRLPLFLAMILPVQLGAATADACTFIPVTRDQSDIYEVFNVAGSSFWFLCCW.

This protein is thought to be cis acting and to contain the putative attachment site on the DNA for the cellular partition apparatus. The chain is Protein IncB (incB) from Escherichia coli.